The following is a 211-amino-acid chain: Small ribosomal subunit protein uS5 (211 aa).

Residues L51–V114 form the S5 DRBM domain.

Belongs to the universal ribosomal protein uS5 family. In terms of assembly, part of the 30S ribosomal subunit. Contacts protein S4.

Its function is as follows. With S4 and S12 plays an important role in translational accuracy. This is Small ribosomal subunit protein uS5 from Ignicoccus hospitalis (strain KIN4/I / DSM 18386 / JCM 14125).